We begin with the raw amino-acid sequence, 125 residues long: Large ribosomal subunit protein bL19 (125 aa).

It belongs to the bacterial ribosomal protein bL19 family.

This protein is located at the 30S-50S ribosomal subunit interface and may play a role in the structure and function of the aminoacyl-tRNA binding site. The sequence is that of Large ribosomal subunit protein bL19 from Ehrlichia ruminantium (strain Gardel).